Here is a 406-residue protein sequence, read N- to C-terminus: Phosphopentomutase (406 aa).

Mn(2+)-binding residues include aspartate 10, aspartate 305, histidine 310, aspartate 346, histidine 347, and histidine 358.

Belongs to the phosphopentomutase family. The cofactor is Mn(2+).

It localises to the cytoplasm. It carries out the reaction 2-deoxy-alpha-D-ribose 1-phosphate = 2-deoxy-D-ribose 5-phosphate. The catalysed reaction is alpha-D-ribose 1-phosphate = D-ribose 5-phosphate. It participates in carbohydrate degradation; 2-deoxy-D-ribose 1-phosphate degradation; D-glyceraldehyde 3-phosphate and acetaldehyde from 2-deoxy-alpha-D-ribose 1-phosphate: step 1/2. Its function is as follows. Isomerase that catalyzes the conversion of deoxy-ribose 1-phosphate (dRib-1-P) and ribose 1-phosphate (Rib-1-P) to deoxy-ribose 5-phosphate (dRib-5-P) and ribose 5-phosphate (Rib-5-P), respectively. This is Phosphopentomutase from Rhizobium leguminosarum bv. trifolii (strain WSM2304).